A 437-amino-acid chain; its full sequence is Lipid II isoglutaminyl synthase (glutamine-hydrolyzing) subunit MurT (437 aa).

Positions 202, 205, 224, and 226 each coordinate Zn(2+). The active site involves aspartate 349.

The protein belongs to the MurCDEF family. MurT subfamily. Forms a heterodimer with GatD.

The catalysed reaction is beta-D-GlcNAc-(1-&gt;4)-Mur2Ac(oyl-L-Ala-gamma-D-Glu-L-Lys-D-Ala-D-Ala)-di-trans,octa-cis-undecaprenyl diphosphate + L-glutamine + ATP + H2O = beta-D-GlcNAc-(1-&gt;4)-Mur2Ac(oyl-L-Ala-D-isoglutaminyl-L-Lys-D-Ala-D-Ala)-di-trans,octa-cis-undecaprenyl diphosphate + L-glutamate + ADP + phosphate + H(+). It catalyses the reaction beta-D-GlcNAc-(1-&gt;4)-Mur2Ac(oyl-L-Ala-gamma-D-Glu-L-Lys-D-Ala-D-Ala)-di-trans,octa-cis-undecaprenyl diphosphate + ATP = beta-D-GlcNAc-(1-&gt;4)-Mur2Ac(oyl-L-Ala-gamma-D-O-P-Glu-L-Lys-D-Ala-D-Ala)-di-trans,octa-cis-undecaprenyl diphosphate + ADP. The enzyme catalyses beta-D-GlcNAc-(1-&gt;4)-Mur2Ac(oyl-L-Ala-gamma-D-O-P-Glu-L-Lys-D-Ala-D-Ala)-di-trans,octa-cis-undecaprenyl diphosphate + NH4(+) = beta-D-GlcNAc-(1-&gt;4)-Mur2Ac(oyl-L-Ala-D-isoglutaminyl-L-Lys-D-Ala-D-Ala)-di-trans,octa-cis-undecaprenyl diphosphate + phosphate + H(+). It participates in cell wall biogenesis; peptidoglycan biosynthesis. In terms of biological role, the lipid II isoglutaminyl synthase complex catalyzes the formation of alpha-D-isoglutamine in the cell wall lipid II stem peptide. The MurT subunit catalyzes the ATP-dependent amidation of D-glutamate residue of lipid II, converting it to an isoglutamine residue. The sequence is that of Lipid II isoglutaminyl synthase (glutamine-hydrolyzing) subunit MurT from Staphylococcus aureus (strain COL).